Consider the following 689-residue polypeptide: Methionine--tRNA ligase (689 aa).

Positions 16 to 26 match the 'HIGH' region motif; it reads PYANAGLHLGH. The Zn(2+) site is built by Cys-147, Cys-150, Cys-160, and Cys-163. The 'KMSKS' region signature appears at 342-346; the sequence is KMSKS. Lys-345 provides a ligand contact to ATP. Positions 585–689 constitute a tRNA-binding domain; the sequence is DFAKVDLRVG…AGVKPGMRVG (105 aa).

The protein belongs to the class-I aminoacyl-tRNA synthetase family. MetG type 1 subfamily. As to quaternary structure, homodimer. The cofactor is Zn(2+).

It is found in the cytoplasm. The catalysed reaction is tRNA(Met) + L-methionine + ATP = L-methionyl-tRNA(Met) + AMP + diphosphate. Functionally, is required not only for elongation of protein synthesis but also for the initiation of all mRNA translation through initiator tRNA(fMet) aminoacylation. In Chromobacterium violaceum (strain ATCC 12472 / DSM 30191 / JCM 1249 / CCUG 213 / NBRC 12614 / NCIMB 9131 / NCTC 9757 / MK), this protein is Methionine--tRNA ligase.